A 178-amino-acid polypeptide reads, in one-letter code: Large ribosomal subunit protein uL6 (178 aa).

The protein belongs to the universal ribosomal protein uL6 family. As to quaternary structure, part of the 50S ribosomal subunit.

In terms of biological role, this protein binds to the 23S rRNA, and is important in its secondary structure. It is located near the subunit interface in the base of the L7/L12 stalk, and near the tRNA binding site of the peptidyltransferase center. The sequence is that of Large ribosomal subunit protein uL6 from Francisella tularensis subsp. holarctica (strain FTNF002-00 / FTA).